A 468-amino-acid polypeptide reads, in one-letter code: ATP synthase subunit beta (468 aa).

155 to 162 serves as a coordination point for ATP; sequence GGAGVGKT.

It belongs to the ATPase alpha/beta chains family. F-type ATPases have 2 components, CF(1) - the catalytic core - and CF(0) - the membrane proton channel. CF(1) has five subunits: alpha(3), beta(3), gamma(1), delta(1), epsilon(1). CF(0) has three main subunits: a(1), b(2) and c(9-12). The alpha and beta chains form an alternating ring which encloses part of the gamma chain. CF(1) is attached to CF(0) by a central stalk formed by the gamma and epsilon chains, while a peripheral stalk is formed by the delta and b chains.

The protein localises to the cell membrane. The enzyme catalyses ATP + H2O + 4 H(+)(in) = ADP + phosphate + 5 H(+)(out). Its function is as follows. Produces ATP from ADP in the presence of a proton gradient across the membrane. The catalytic sites are hosted primarily by the beta subunits. This Bacillus cereus (strain G9842) protein is ATP synthase subunit beta.